We begin with the raw amino-acid sequence, 354 residues long: Protein Wnt-11 (354 aa).

The signal sequence occupies residues 1-23 (MTEYRNFLLLFITSLSVIYPCTG). N-linked (GlcNAc...) asparagine glycosylation is found at N32, N39, and N89. 9 disulfides stabilise this stretch: C129–C137, C139–C156, C209–C223, C211–C218, C283–C314, C299–C309, C329–C344, C331–C341, and C336–C337. The O-palmitoleoyl serine; by PORCN moiety is linked to residue S215. N-linked (GlcNAc...) asparagine glycosylation occurs at N300.

This sequence belongs to the Wnt family. In terms of processing, palmitoleoylation is required for efficient binding to frizzled receptors. Depalmitoleoylation leads to Wnt signaling pathway inhibition.

It localises to the secreted. Its subcellular location is the extracellular space. It is found in the extracellular matrix. In terms of biological role, ligand for fzd5, a member of the G-protein coupled frizzled receptor family. Plays a role in early eye development, possibly through wnt non-canonical signaling. Promotes eye formation, at least partially, by antagonizing the Wnt/beta-catenin pathway. In addition, promotes coherence of eye field cells, potentially contributing to the coordinated morphogenetic behaviors of cells in the nascent eye field. This chain is Protein Wnt-11 (wnt11), found in Danio rerio (Zebrafish).